The sequence spans 535 residues: MLGPCMLLLLLLLGLRLQLSLGIIPVEEENPDFWNREAAEALGAAKKLQPAQTAAKNLIIFLGDGMGVSTVTAARILKGQKKDKLGPEIPLAMDRFPYVALSKTYNVDKHVPDSGATATAYLCGVKGNFQTIGLSAAARFNQCNTTRGNEVISVMNRAKKAGKSVGVVTTTRVQHASPAGTYAHTVNRNWYSDADVPASARQEGCQDIATQLISNMDIDVILGGGRKYMFRMGTPDPEYPDDYSQGGTRLDGKNLVQEWLAKRQGARYVWNRTELMQASLDPSVTHLMGLFEPGDMKYEIHRDSTLDPSLMEMTEAALRLLSRNPRGFFLFVEGGRIDHGHHESRAYRALTETIMFDDAIERAGQLTSEEDTLSLVTADHSHVFSFGGYPLRGSSIFGLAPGKARDRKAYTVLLYGNGPGYVLKDGARPDVTESESGSPEYRQQSAVPLDEETHAGEDVAVFARGPQAHLVHGVQEQTFIAHVMAFAACLEPYTACDLAPPAGTTDAAHPGRSVVPALLPLLAGTLLLLETATAP.

The N-terminal stretch at 1–22 (MLGPCMLLLLLLLGLRLQLSLG) is a signal peptide. Mg(2+) is bound at residue Asp64. Residues Asp64 and Ser114 each coordinate Zn(2+). Residue Ser114 is the Phosphoserine intermediate of the active site. An intrachain disulfide couples Cys143 to Cys205. Asn144 carries an N-linked (GlcNAc...) asparagine glycan. Ser177 is a Mg(2+) binding site. Glu238 serves as a coordination point for Ca(2+). Residue Asn271 is glycosylated (N-linked (GlcNAc...) asparagine). Ca(2+) is bound by residues Phe291, Glu292, and Asp307. Glu333 contributes to the Mg(2+) binding site. Zn(2+) contacts are provided by Asp338, His342, Asp379, and His380. The interval 425–449 (DGARPDVTESESGSPEYRQQSAVPL) is disordered. The span at 434 to 446 (SESGSPEYRQQSA) shows a compositional bias: polar residues. His454 contributes to the Zn(2+) binding site. A disulfide bridge links Cys489 with Cys496. The GPI-anchor amidated aspartate moiety is linked to residue Asp506. The propeptide at 507–535 (AAHPGRSVVPALLPLLAGTLLLLETATAP) is removed in mature form. Residues 513–529 (SVVPALLPLLAGTLLLL) traverse the membrane as a helical segment.

This sequence belongs to the alkaline phosphatase family. In terms of assembly, homodimer. The cofactor is Mg(2+). Requires Zn(2+) as cofactor. Ca(2+) is required as a cofactor. Detected in placenta (at protein level).

Its subcellular location is the cell membrane. The enzyme catalyses a phosphate monoester + H2O = an alcohol + phosphate. Its function is as follows. Alkaline phosphatase that can hydrolyze various phosphate compounds. This Homo sapiens (Human) protein is Alkaline phosphatase, placental type.